The following is a 177-amino-acid chain: MSRVAKAPVSIPAGVEVTLNEQTLTVKGGKGSLTRVINNAVNVVIEAGVVKFLPVEGVSNAWAQAGTTRALVNNMVVGVSQGFERKLKLVGVGYRAKLVGSDIDLTLGFSHPLVHKLPAGVTAECPSQTDIVLRGVDKQLIGQVAAEIRGYRPPEPYKGKGVRYDDEVVRRKEAKKK.

It belongs to the universal ribosomal protein uL6 family. In terms of assembly, part of the 50S ribosomal subunit.

In terms of biological role, this protein binds to the 23S rRNA, and is important in its secondary structure. It is located near the subunit interface in the base of the L7/L12 stalk, and near the tRNA binding site of the peptidyltransferase center. The protein is Large ribosomal subunit protein uL6 of Shewanella baltica (strain OS223).